The sequence spans 349 residues: tRNA pseudouridine synthase D (349 aa).

Phenylalanine 27 is a substrate binding site. Aspartate 80 functions as the Nucleophile in the catalytic mechanism. A substrate-binding site is contributed by asparagine 129. In terms of domain architecture, TRUD spans 155–303 (GVPNYFGAQR…VEASRRAMLL (149 aa)). Phenylalanine 329 provides a ligand contact to substrate.

Belongs to the pseudouridine synthase TruD family.

The enzyme catalyses uridine(13) in tRNA = pseudouridine(13) in tRNA. In terms of biological role, responsible for synthesis of pseudouridine from uracil-13 in transfer RNAs. This Salmonella typhi protein is tRNA pseudouridine synthase D.